We begin with the raw amino-acid sequence, 132 residues long: Large ribosomal subunit protein uL14 (132 aa).

This sequence belongs to the universal ribosomal protein uL14 family. As to quaternary structure, part of the 50S ribosomal subunit. Forms a cluster with proteins L3 and L24e, part of which may contact the 16S rRNA in 2 intersubunit bridges.

In terms of biological role, binds to 23S rRNA. Forms part of two intersubunit bridges in the 70S ribosome. The chain is Large ribosomal subunit protein uL14 from Methanosarcina mazei (strain ATCC BAA-159 / DSM 3647 / Goe1 / Go1 / JCM 11833 / OCM 88) (Methanosarcina frisia).